The following is a 61-amino-acid chain: Small ribosomal subunit protein uS14B (61 aa).

Residues cysteine 24, cysteine 27, cysteine 40, and cysteine 43 each contribute to the Zn(2+) site.

The protein belongs to the universal ribosomal protein uS14 family. Zinc-binding uS14 subfamily. Part of the 30S ribosomal subunit. Contacts proteins S3 and S10. It depends on Zn(2+) as a cofactor.

Binds 16S rRNA, required for the assembly of 30S particles and may also be responsible for determining the conformation of the 16S rRNA at the A site. The sequence is that of Small ribosomal subunit protein uS14B from Listeria welshimeri serovar 6b (strain ATCC 35897 / DSM 20650 / CCUG 15529 / CIP 8149 / NCTC 11857 / SLCC 5334 / V8).